A 191-amino-acid polypeptide reads, in one-letter code: MKTLLKSIKITLVFCVFFSVFYILVLWLFAQVAGPNRGNAEVVTLNGKVVGAANVGQTFTEEKYFWGRPSCAGDGYDATSSAGSNKGPTNPEYLAEVEARIDTFLIHHPYLARKDVPAEMVTASASGLDPDITPQSAYVQVKRVAQARGMNVEEVRRVVDKAVEKPLLGIFGTEKVNVLKLNIALEELKNR.

A helical transmembrane segment spans residues 10–30 (ITLVFCVFFSVFYILVLWLFA).

Belongs to the KdpC family. The system is composed of three essential subunits: KdpA, KdpB and KdpC.

The protein resides in the cell inner membrane. Functionally, part of the high-affinity ATP-driven potassium transport (or Kdp) system, which catalyzes the hydrolysis of ATP coupled with the electrogenic transport of potassium into the cytoplasm. This subunit acts as a catalytic chaperone that increases the ATP-binding affinity of the ATP-hydrolyzing subunit KdpB by the formation of a transient KdpB/KdpC/ATP ternary complex. This chain is Potassium-transporting ATPase KdpC subunit, found in Bacteroides fragilis (strain ATCC 25285 / DSM 2151 / CCUG 4856 / JCM 11019 / LMG 10263 / NCTC 9343 / Onslow / VPI 2553 / EN-2).